The sequence spans 795 residues: Phenylalanine--tRNA ligase beta subunit (795 aa).

Residues 39–148 form the tRNA-binding domain; sequence AAKFNGVLVG…SDAPVGTDLR (110 aa). The region spanning 401-476 is the B5 domain; sequence PKVTEVRLRR…RVYGYNSIPN (76 aa). The Mg(2+) site is built by Asp454, Asp460, Glu463, and Glu464. Positions 701 to 794 constitute an FDX-ACB domain; it reads SKFPSNRRDI…LAEQFNASLR (94 aa).

It belongs to the phenylalanyl-tRNA synthetase beta subunit family. Type 1 subfamily. Tetramer of two alpha and two beta subunits. Mg(2+) is required as a cofactor.

The protein localises to the cytoplasm. The catalysed reaction is tRNA(Phe) + L-phenylalanine + ATP = L-phenylalanyl-tRNA(Phe) + AMP + diphosphate + H(+). The sequence is that of Phenylalanine--tRNA ligase beta subunit from Pseudoalteromonas translucida (strain TAC 125).